Consider the following 32-residue polypeptide: Giant hemoglobin AIV chain (32 aa).

It belongs to the globin family. Giant hemoglobin is composed of four heme-containing chains (AI to AIV), and two linker chains (AV and AVI).

This Lamellibrachia sp. (Deep-sea giant tube worm) protein is Giant hemoglobin AIV chain.